A 77-amino-acid polypeptide reads, in one-letter code: DNA-directed RNA polymerase subunit Rpo10 (77 aa).

4 residues coordinate Zn(2+): Cys7, Cys10, Cys44, and Cys45.

Belongs to the archaeal Rpo10/eukaryotic RPB10 RNA polymerase subunit family. Part of the RNA polymerase complex. Zn(2+) serves as cofactor.

It localises to the cytoplasm. It catalyses the reaction RNA(n) + a ribonucleoside 5'-triphosphate = RNA(n+1) + diphosphate. In terms of biological role, DNA-dependent RNA polymerase (RNAP) catalyzes the transcription of DNA into RNA using the four ribonucleoside triphosphates as substrates. In Aeropyrum pernix (strain ATCC 700893 / DSM 11879 / JCM 9820 / NBRC 100138 / K1), this protein is DNA-directed RNA polymerase subunit Rpo10.